Reading from the N-terminus, the 422-residue chain is NADH-quinone oxidoreductase subunit D 1 (422 aa).

It belongs to the complex I 49 kDa subunit family. NDH-1 is composed of 14 different subunits. Subunits NuoB, C, D, E, F, and G constitute the peripheral sector of the complex.

The protein resides in the cell membrane. The enzyme catalyses a quinone + NADH + 5 H(+)(in) = a quinol + NAD(+) + 4 H(+)(out). Its function is as follows. NDH-1 shuttles electrons from NADH, via FMN and iron-sulfur (Fe-S) centers, to quinones in the respiratory chain. The immediate electron acceptor for the enzyme in this species is believed to be ubiquinone. Couples the redox reaction to proton translocation (for every two electrons transferred, four hydrogen ions are translocated across the cytoplasmic membrane), and thus conserves the redox energy in a proton gradient. In Herpetosiphon aurantiacus (strain ATCC 23779 / DSM 785 / 114-95), this protein is NADH-quinone oxidoreductase subunit D 1.